A 72-amino-acid chain; its full sequence is Protein kish-A (72 aa).

Residues 1–26 (MSAIFNFQSLLTVILLLICTCAYIRS) form the signal peptide. At 27–53 (LAPSLLDKNKTGLLGIFWKCARIGERK) the chain is on the extracellular side. N-linked (GlcNAc...) asparagine glycosylation is present at Asn-35. Residues 54-71 (SPYVAVCCVVMAFSILFV) traverse the membrane as a helical segment. Gln-72 is a topological domain (cytoplasmic).

This sequence belongs to the KISH family.

It localises to the golgi apparatus membrane. Its function is as follows. Involved in the early part of the secretory pathway. In Gallus gallus (Chicken), this protein is Protein kish-A (TMEM167A).